The sequence spans 293 residues: Ribosomal RNA small subunit methyltransferase A (293 aa).

S-adenosyl-L-methionine contacts are provided by Asn-33, Val-35, Gly-60, Glu-81, Asp-111, and Asn-130.

Belongs to the class I-like SAM-binding methyltransferase superfamily. rRNA adenine N(6)-methyltransferase family. RsmA subfamily.

Its subcellular location is the cytoplasm. It carries out the reaction adenosine(1518)/adenosine(1519) in 16S rRNA + 4 S-adenosyl-L-methionine = N(6)-dimethyladenosine(1518)/N(6)-dimethyladenosine(1519) in 16S rRNA + 4 S-adenosyl-L-homocysteine + 4 H(+). Specifically dimethylates two adjacent adenosines (A1518 and A1519) in the loop of a conserved hairpin near the 3'-end of 16S rRNA in the 30S particle. May play a critical role in biogenesis of 30S subunits. This Corynebacterium glutamicum (strain ATCC 13032 / DSM 20300 / JCM 1318 / BCRC 11384 / CCUG 27702 / LMG 3730 / NBRC 12168 / NCIMB 10025 / NRRL B-2784 / 534) protein is Ribosomal RNA small subunit methyltransferase A.